Here is a 339-residue protein sequence, read N- to C-terminus: Ketol-acid reductoisomerase (NADP(+)) (339 aa).

The 182-residue stretch at 1–182 (MRVYYDRDAD…GGGRAGIIET (182 aa)) folds into the KARI N-terminal Rossmann domain. NADP(+) is bound by residues 24–27 (YGSQ), Arg48, Ser51, Thr53, and 83–86 (DELQ). His108 is an active-site residue. An NADP(+)-binding site is contributed by Gly134. In terms of domain architecture, KARI C-terminal knotted spans 183–328 (TFKEECETDL…AKLRGMMPWI (146 aa)). The Mg(2+) site is built by Asp191, Glu195, Glu227, and Glu231. Ser252 provides a ligand contact to substrate.

Belongs to the ketol-acid reductoisomerase family. Requires Mg(2+) as cofactor.

The enzyme catalyses (2R)-2,3-dihydroxy-3-methylbutanoate + NADP(+) = (2S)-2-acetolactate + NADPH + H(+). It catalyses the reaction (2R,3R)-2,3-dihydroxy-3-methylpentanoate + NADP(+) = (S)-2-ethyl-2-hydroxy-3-oxobutanoate + NADPH + H(+). The protein operates within amino-acid biosynthesis; L-isoleucine biosynthesis; L-isoleucine from 2-oxobutanoate: step 2/4. It participates in amino-acid biosynthesis; L-valine biosynthesis; L-valine from pyruvate: step 2/4. Involved in the biosynthesis of branched-chain amino acids (BCAA). Catalyzes an alkyl-migration followed by a ketol-acid reduction of (S)-2-acetolactate (S2AL) to yield (R)-2,3-dihydroxy-isovalerate. In the isomerase reaction, S2AL is rearranged via a Mg-dependent methyl migration to produce 3-hydroxy-3-methyl-2-ketobutyrate (HMKB). In the reductase reaction, this 2-ketoacid undergoes a metal-dependent reduction by NADPH to yield (R)-2,3-dihydroxy-isovalerate. The protein is Ketol-acid reductoisomerase (NADP(+)) of Methylorubrum extorquens (strain CM4 / NCIMB 13688) (Methylobacterium extorquens).